The chain runs to 533 residues: E3 ubiquitin-protein ligase MGRN1 (533 aa).

G2 carries N-myristoyl glycine lipidation. An RING-type zinc finger spans residues 278–317 (ECVVCLSDLRDTLILPCRHLCLCTSCADTLRYQANNCPIC). Residues 385 to 388 (PSAP) carry the Required for TSG101-binding motif. Y390 is subject to Phosphotyrosine. The disordered stretch occupies residues 421–519 (QKGKTQSKSP…QPVPPADIYL (99 aa)). A compositionally biased stretch (polar residues) spans 423–439 (GKTQSKSPDSTLRSPSS). 3 positions are modified to phosphoserine: S429, S450, and S502. The span at 443–454 (EEDEEKLSEDPE) shows a compositional bias: acidic residues.

Interacts with MC1R and MC4R. Interacts with TSG101. Interacts with mislocalized cytosolically exposed PRNP; this interaction alters MGRN1 subcellular location and causes lysosomal enlargement. Autoubiquitinated in vitro.

Its subcellular location is the cytoplasm. The protein localises to the cytosol. It localises to the cell membrane. The protein resides in the early endosome. The enzyme catalyses S-ubiquitinyl-[E2 ubiquitin-conjugating enzyme]-L-cysteine + [acceptor protein]-L-lysine = [E2 ubiquitin-conjugating enzyme]-L-cysteine + N(6)-ubiquitinyl-[acceptor protein]-L-lysine.. Its pathway is protein modification; protein ubiquitination. Its function is as follows. E3 ubiquitin-protein ligase. Mediates TSG101 monoubiquitination at multiple sites. Plays a role in the regulation of endosome-to-lysosome trafficking. Impairs MC1R- and MC4R-signaling by competing with GNAS-binding to MCRs and inhibiting agonist-induced cAMP production. Does not inhibit ADRB2-signaling. Does not promote MC1R ubiquitination. Also acts as a negative regulator of hedgehog signaling. The polypeptide is E3 ubiquitin-protein ligase MGRN1 (Mgrn1) (Rattus norvegicus (Rat)).